Here is a 101-residue protein sequence, read N- to C-terminus: NAD(P)H-quinone oxidoreductase subunit 4L, chloroplastic (101 aa).

3 helical membrane passes run 2–22, 32–52, and 61–81; these read ILEH…YGLI, MCLE…SDFF, and IFCI…LAIV.

This sequence belongs to the complex I subunit 4L family. In terms of assembly, NDH is composed of at least 16 different subunits, 5 of which are encoded in the nucleus.

The protein resides in the plastid. It is found in the chloroplast thylakoid membrane. The enzyme catalyses a plastoquinone + NADH + (n+1) H(+)(in) = a plastoquinol + NAD(+) + n H(+)(out). It carries out the reaction a plastoquinone + NADPH + (n+1) H(+)(in) = a plastoquinol + NADP(+) + n H(+)(out). Functionally, NDH shuttles electrons from NAD(P)H:plastoquinone, via FMN and iron-sulfur (Fe-S) centers, to quinones in the photosynthetic chain and possibly in a chloroplast respiratory chain. The immediate electron acceptor for the enzyme in this species is believed to be plastoquinone. Couples the redox reaction to proton translocation, and thus conserves the redox energy in a proton gradient. This is NAD(P)H-quinone oxidoreductase subunit 4L, chloroplastic from Arabidopsis thaliana (Mouse-ear cress).